The sequence spans 269 residues: Protein OPG079 (269 aa).

The protein belongs to the orthopoxvirus OPG079 family. In terms of assembly, homoomultimer (Potential). Interacts with the small subunit of ribonucleotide reductase. Interacts with host FAM111A; this interaction protomtes OPG079 degradation through autophagy.

The protein resides in the host cytoplasm. Its function is as follows. Plays an essential role in viral DNA replication. Binds to ssDNA with high affinity and localizes to cytoplasmic factories where nascent viral genomes accumulate. May disrupt loops, hairpins and other secondary structures present on ssDNA to reduce and eliminate pausing of viral DNA polymerase at specific sites during elongation. The polypeptide is Protein OPG079 (OPG079) (Vaccinia virus (strain Copenhagen) (VACV)).